The sequence spans 376 residues: 1-deoxy-D-xylulose 5-phosphate reductoisomerase (376 aa).

Positions 12, 13, 14, 15, 39, 40, and 110 each coordinate NADPH. Position 111 (Lys-111) interacts with 1-deoxy-D-xylulose 5-phosphate. Residue Glu-112 coordinates NADPH. Asp-136 contributes to the Mn(2+) binding site. Positions 137, 138, 162, and 185 each coordinate 1-deoxy-D-xylulose 5-phosphate. Glu-138 serves as a coordination point for Mn(2+). Gly-191 is an NADPH binding site. 4 residues coordinate 1-deoxy-D-xylulose 5-phosphate: Ser-198, Asn-203, Lys-204, and Glu-207. Residue Glu-207 coordinates Mn(2+).

The protein belongs to the DXR family. It depends on Mg(2+) as a cofactor. Mn(2+) serves as cofactor.

The catalysed reaction is 2-C-methyl-D-erythritol 4-phosphate + NADP(+) = 1-deoxy-D-xylulose 5-phosphate + NADPH + H(+). Its pathway is isoprenoid biosynthesis; isopentenyl diphosphate biosynthesis via DXP pathway; isopentenyl diphosphate from 1-deoxy-D-xylulose 5-phosphate: step 1/6. Functionally, catalyzes the NADPH-dependent rearrangement and reduction of 1-deoxy-D-xylulose-5-phosphate (DXP) to 2-C-methyl-D-erythritol 4-phosphate (MEP). This Treponema pallidum (strain Nichols) protein is 1-deoxy-D-xylulose 5-phosphate reductoisomerase.